Reading from the N-terminus, the 706-residue chain is Glycine--tRNA ligase beta subunit (706 aa).

This sequence belongs to the class-II aminoacyl-tRNA synthetase family. In terms of assembly, tetramer of two alpha and two beta subunits.

The protein resides in the cytoplasm. It catalyses the reaction tRNA(Gly) + glycine + ATP = glycyl-tRNA(Gly) + AMP + diphosphate. In Acidobacterium capsulatum (strain ATCC 51196 / DSM 11244 / BCRC 80197 / JCM 7670 / NBRC 15755 / NCIMB 13165 / 161), this protein is Glycine--tRNA ligase beta subunit.